We begin with the raw amino-acid sequence, 367 residues long: Phosphoribosylaminoimidazole-succinocarboxamide synthase (367 aa).

The protein belongs to the SAICAR synthetase family.

It catalyses the reaction 5-amino-1-(5-phospho-D-ribosyl)imidazole-4-carboxylate + L-aspartate + ATP = (2S)-2-[5-amino-1-(5-phospho-beta-D-ribosyl)imidazole-4-carboxamido]succinate + ADP + phosphate + 2 H(+). It functions in the pathway purine metabolism; IMP biosynthesis via de novo pathway; 5-amino-1-(5-phospho-D-ribosyl)imidazole-4-carboxamide from 5-amino-1-(5-phospho-D-ribosyl)imidazole-4-carboxylate: step 1/2. The sequence is that of Phosphoribosylaminoimidazole-succinocarboxamide synthase from Shewanella putrefaciens (strain CN-32 / ATCC BAA-453).